Reading from the N-terminus, the 239-residue chain is Orotidine 5'-phosphate decarboxylase (239 aa).

Residues aspartate 10, lysine 33, 60-69, threonine 124, arginine 186, glutamine 195, glycine 215, and arginine 216 contribute to the substrate site; that span reads DLKLYDIPNT. Lysine 62 serves as the catalytic Proton donor.

This sequence belongs to the OMP decarboxylase family. Type 1 subfamily. Homodimer.

The enzyme catalyses orotidine 5'-phosphate + H(+) = UMP + CO2. The protein operates within pyrimidine metabolism; UMP biosynthesis via de novo pathway; UMP from orotate: step 2/2. Its function is as follows. Catalyzes the decarboxylation of orotidine 5'-monophosphate (OMP) to uridine 5'-monophosphate (UMP). This Latilactobacillus sakei subsp. sakei (strain 23K) (Lactobacillus sakei subsp. sakei) protein is Orotidine 5'-phosphate decarboxylase.